Here is a 510-residue protein sequence, read N- to C-terminus: Light-independent protochlorophyllide reductase subunit B (510 aa).

Position 36 (Asp-36) interacts with [4Fe-4S] cluster. The active-site Proton donor is Asp-296. A substrate-binding site is contributed by 431–432; the sequence is GM.

The protein belongs to the ChlB/BchB/BchZ family. In terms of assembly, protochlorophyllide reductase is composed of three subunits; ChlL, ChlN and ChlB. Forms a heterotetramer of two ChlB and two ChlN subunits. The cofactor is [4Fe-4S] cluster.

It localises to the plastid. Its subcellular location is the chloroplast. The enzyme catalyses chlorophyllide a + oxidized 2[4Fe-4S]-[ferredoxin] + 2 ADP + 2 phosphate = protochlorophyllide a + reduced 2[4Fe-4S]-[ferredoxin] + 2 ATP + 2 H2O. The protein operates within porphyrin-containing compound metabolism; chlorophyll biosynthesis (light-independent). Functionally, component of the dark-operative protochlorophyllide reductase (DPOR) that uses Mg-ATP and reduced ferredoxin to reduce ring D of protochlorophyllide (Pchlide) to form chlorophyllide a (Chlide). This reaction is light-independent. The NB-protein (ChlN-ChlB) is the catalytic component of the complex. The sequence is that of Light-independent protochlorophyllide reductase subunit B from Auxenochlorella protothecoides (Green microalga).